We begin with the raw amino-acid sequence, 591 residues long: V-type ATP synthase alpha chain (591 aa).

ATP is bound at residue 232-239 (GPFGAGKT).

Belongs to the ATPase alpha/beta chains family.

The enzyme catalyses ATP + H2O + 4 H(+)(in) = ADP + phosphate + 5 H(+)(out). In terms of biological role, produces ATP from ADP in the presence of a proton gradient across the membrane. The V-type alpha chain is a catalytic subunit. The sequence is that of V-type ATP synthase alpha chain from Nitrosococcus oceani (strain ATCC 19707 / BCRC 17464 / JCM 30415 / NCIMB 11848 / C-107).